A 905-amino-acid chain; its full sequence is Probable cation-transporting ATPase F (905 aa).

3 helical membrane passes run 84-104, 248-268, and 283-303; these read EFVD…VGFI, FSKF…GVGL, and ALAV…TLAI. Aspartate 333 (4-aspartylphosphate intermediate) is an active-site residue. Residues aspartate 643 and aspartate 647 each coordinate Mg(2+). A run of 6 helical transmembrane segments spans residues 716-736, 738-758, 778-798, 808-828, 842-862, and 872-892; these read ILAA…ILWI, MTTA…AGIM, TLLV…WELD, TAAL…CRSL, WIIL…YLPA, and IDIG…IVVA.

This sequence belongs to the cation transport ATPase (P-type) (TC 3.A.3) family. Type IIA subfamily.

It is found in the cell membrane. It catalyses the reaction ATP + H2O = ADP + phosphate + H(+). This Mycobacterium bovis (strain ATCC BAA-935 / AF2122/97) protein is Probable cation-transporting ATPase F (ctpF).